A 1853-amino-acid polypeptide reads, in one-letter code: Cellulosomal-scaffolding protein A (1853 aa).

The N-terminal stretch at 1–28 (MRKVISMLLVVAMLTTIFAAMIPQTVSA) is a signal peptide. 2 consecutive Cohesin domains span residues 29 to 182 (ATMT…VPSD) and 183 to 322 (GVVV…VNVG). 2 linker (Pro/Thr-rich) regions span residues 323-363 (NATP…PANT) and 523-559 (GGSV…SDDP). Over residues 323–364 (NATPTKGATPTNTATPTKSATATPTRPSVPTNTPTNTPANTP) the composition is skewed to low complexity. Disordered stretches follow at residues 323-367 (NATP…PVSG) and 525-559 (SVVP…SDDP). In terms of domain architecture, CBM3 spans 365-523 (VSGNLKVEFY…GVLVWGKEPG (159 aa)). A compositionally biased stretch (low complexity) spans 525–555 (SVVPSTQPVTTPPATTKPPATTKPPATTIPP). Cohesin domains follow at residues 560–704 (NAIK…NVGD), 724–866 (AVRI…VNVG), 889–1031 (AVRI…VNVG), 1054–1196 (AVRI…VNVG), 1219–1361 (AVRI…VNVG), 1384–1526 (AVRI…VNVG), and 1548–1690 (KLTL…VLVT). The region spanning 1785–1852 (IMMWVGDIVK…FGATSSDYDA (68 aa)) is the Dockerin domain.

O-glycosylated on most but not all Thr residues of the linker units. The reducing sugar is galactopyranose.

The protein resides in the secreted. Its function is as follows. Acts as a scaffolding protein in the cellulosome. It promotes binding of cellulose to the catalytic domains of the cellulolytic enzymes. This is Cellulosomal-scaffolding protein A (cipA) from Acetivibrio thermocellus (strain ATCC 27405 / DSM 1237 / JCM 9322 / NBRC 103400 / NCIMB 10682 / NRRL B-4536 / VPI 7372) (Clostridium thermocellum).